Reading from the N-terminus, the 204-residue chain is Probable dTDP-4-oxo-2,6-dideoxy-D-glucose 3,5-epimerase (204 aa).

Substrate contacts are provided by residues R21, E26, 45–47 (QAN), K70, and H117. Catalysis depends on Y130, which acts as the Proton donor. E141 provides a ligand contact to substrate. The tract at residues 164–204 (VGEGTPTHRPWRRPRRPGILPDYEGVPGALHRGGGRRGTGP) is disordered.

The protein belongs to the dTDP-4-dehydrorhamnose 3,5-epimerase family.

It participates in antibiotic biosynthesis. In terms of biological role, involved in the biosynthesis of one of the two 2,6-deoxysugars, dTDP-L-oleandrose, attached to the macrolactone ring oleandolide to produce the aglycone antibiotic oleandomycin. Probably catalyzes the conversion of dTDP-4-keto-2,6-dideoxy-alpha-D-glucose to dTDP-4-keto-2,6-dideoxy-beta-L-galactose. In Streptomyces antibioticus, this protein is Probable dTDP-4-oxo-2,6-dideoxy-D-glucose 3,5-epimerase.